Here is a 330-residue protein sequence, read N- to C-terminus: Membrane progestin receptor gamma (330 aa).

Over 1-51 (MLSLKLPRLFSIDQIPQVFHEQGILFGYRHPQSSATACILSLFQMTNETLN) the chain is Cytoplasmic. Residues 52 to 72 (IWTHLLPFWFFAWRFVTALYM) form a helical membrane-spanning segment. The Extracellular portion of the chain corresponds to 73–80 (TDIKNDSY). The chain crosses the membrane as a helical span at residues 81 to 101 (SWPMLVYMCTSCVYPLVSSCA). Residues 102–113 (HTFSSMSKNARH) lie on the Cytoplasmic side of the membrane. The chain crosses the membrane as a helical span at residues 114–134 (ICYFLDYGAVNLFSLGSAIAY). Over 135–141 (SAYTFPD) the chain is Extracellular. The chain crosses the membrane as a helical span at residues 142 to 162 (ALMCTTFHDYYVALAVLNTIL). The Cytoplasmic segment spans residues 163-186 (STGLSCYSRFLEIQKPRLCKVIRV). A helical transmembrane segment spans residues 187–207 (LAFAYPYTWDSLPIFYRLFLF). At 208 to 253 (PGESAQNEATSYHQKHMIMTLLASFLYSAHLPERLAPGRFDYIGHS) the chain is on the extracellular side. Residues 254 to 274 (HQLFHVCVILATHMQMEAILL) traverse the membrane as a helical segment. The Cytoplasmic segment spans residues 275–294 (DKTLRKEWLLATSKPFSFSQ). The helical transmembrane segment at 295 to 315 (IAGAILLCIIFSLSNIIYFSA) threads the bilayer. At 316–330 (ALYRIPKPELHKKET) the chain is on the extracellular side.

Belongs to the ADIPOR family. Expressed in the brain, lung, kidney, colon, adrenal and lung.

The protein localises to the cell membrane. Plasma membrane progesterone (P4) receptor coupled to G proteins. Seems to act through a G(i) mediated pathway. May be involved in oocyte maturation. This Homo sapiens (Human) protein is Membrane progestin receptor gamma.